Here is a 544-residue protein sequence, read N- to C-terminus: MEAWRCVRRGYGRCVVGRGRYPMLPHHQKSLGRDWTTPWENLQKCCWNRHISSCMRWPGHYSRAPYPYFSSRHFSLNWRPPGLFESRAPFQYWNWRPDSLSQTSLFHLSSYIMNSEGDEPSSKRRKHQGTIQRHWEYICNHNKENTKILGDENVDPICEDSENKFEFSVMSYNILSQDLLEDNSHLYKHCRRPVLHWSFRFPNILKEIKHFDADVLCLQEVQEDHYGTEIRPSLESLGYHCEYKMRTGRKPDGCAICFKHSKFSLLSVNPVEFYRRDVPLLDRDNVGLVLLLQPKIPSATSPAICVANTHLLYNPRRGDIKLTQLAMLLAEISSVAHQKDGRFCPIVMCGDFNSVPGSPLYSFIKEGKLNYEGLAIGKVSGQEQSSRGQRILSIPIWPPNLGISQNCVYEVQQVPKVEKPDGDLTQPELDKTEVLVTAEKLSSNLQHHFSLSSVYSHYLPDTGIPEVTTCHSRSAVTVDYIFYSAEKEGVAEQPGAEVALVGGLKLLARLSLLTEQDLWTVNGLPNENNSSDHLPLLAKFRLEL.

It belongs to the CCR4/nocturin family.

The chain is Protein angel homolog 2 (ANGEL2) from Bos taurus (Bovine).